The following is a 311-amino-acid chain: Methionyl-tRNA formyltransferase (311 aa).

112-115 (SLLP) lines the (6S)-5,6,7,8-tetrahydrofolate pocket.

The protein belongs to the Fmt family.

It carries out the reaction L-methionyl-tRNA(fMet) + (6R)-10-formyltetrahydrofolate = N-formyl-L-methionyl-tRNA(fMet) + (6S)-5,6,7,8-tetrahydrofolate + H(+). Its function is as follows. Attaches a formyl group to the free amino group of methionyl-tRNA(fMet). The formyl group appears to play a dual role in the initiator identity of N-formylmethionyl-tRNA by promoting its recognition by IF2 and preventing the misappropriation of this tRNA by the elongation apparatus. The chain is Methionyl-tRNA formyltransferase from Bradyrhizobium sp. (strain BTAi1 / ATCC BAA-1182).